We begin with the raw amino-acid sequence, 503 residues long: Aminoaldehyde dehydrogenase 2, peroxisomal (503 aa).

Na(+)-binding residues include Ile28 and Asp99. Trp161 and Lys185 together coordinate NAD(+). Residue Leu189 participates in Na(+) binding. Residue Ser239 participates in NAD(+) binding. The active-site Proton acceptor is the Glu260. The active-site Nucleophile is the Cys294. A Microbody targeting signal motif is present at residues 501 to 503; that stretch reads AKL.

It belongs to the aldehyde dehydrogenase family. As to quaternary structure, forms homodimers.

The protein localises to the peroxisome. It carries out the reaction 3-aminopropanal + NAD(+) + H2O = beta-alanine + NADH + 2 H(+). The enzyme catalyses 4-aminobutanal + NAD(+) + H2O = 4-aminobutanoate + NADH + 2 H(+). The catalysed reaction is 4-guanidinobutanal + NAD(+) + H2O = 4-guanidinobutanoate + NADH + 2 H(+). The protein operates within amine and polyamine biosynthesis; betaine biosynthesis via choline pathway; betaine from betaine aldehyde: step 1/1. Its function is as follows. Dehydrogenase that catalyzes the oxidation of several aminoaldehydes. Metabolizes and detoxifies aldehyde products of polyamine degradation to non-toxic amino acids. Catalyzes the oxidation of 3-aminopropanal to beta-alanine. Catalyzes the oxidation of 4-aminobutanal to 4-aminobutanoate. Catalyzes the oxidation of 4-guanidinobutanal to 4-guanidinobutanoate. The sequence is that of Aminoaldehyde dehydrogenase 2, peroxisomal from Pisum sativum (Garden pea).